Reading from the N-terminus, the 382-residue chain is Mannitol-1-phosphate 5-dehydrogenase (382 aa).

3–14 (ALHFGAGNIGRG) serves as a coordination point for NAD(+).

It belongs to the mannitol dehydrogenase family.

The catalysed reaction is D-mannitol 1-phosphate + NAD(+) = beta-D-fructose 6-phosphate + NADH + H(+). This is Mannitol-1-phosphate 5-dehydrogenase from Salmonella typhi.